A 392-amino-acid polypeptide reads, in one-letter code: GTPase Obg (392 aa).

The Obg domain occupies 1-159 (MKFIDEALIR…RDLQLELMLL (159 aa)). The OBG-type G domain occupies 160–333 (ADVGMLGLPN…LCRDIMDFIE (174 aa)). Residues 166–173 (GLPNAGKS), 191–195 (FTTLV), 213–216 (DIPG), 283–286 (NKID), and 314–316 (SAA) contribute to the GTP site. 2 residues coordinate Mg(2+): S173 and T193. Residues 362 to 392 (EQVFTEDDQEGDDWDDWSEDDEEGVEIIYKP) are disordered. Acidic residues predominate over residues 365-386 (FTEDDQEGDDWDDWSEDDEEGV).

This sequence belongs to the TRAFAC class OBG-HflX-like GTPase superfamily. OBG GTPase family. Monomer. Mg(2+) serves as cofactor.

The protein localises to the cytoplasm. An essential GTPase which binds GTP, GDP and possibly (p)ppGpp with moderate affinity, with high nucleotide exchange rates and a fairly low GTP hydrolysis rate. Plays a role in control of the cell cycle, stress response, ribosome biogenesis and in those bacteria that undergo differentiation, in morphogenesis control. The protein is GTPase Obg of Histophilus somni (strain 129Pt) (Haemophilus somnus).